The sequence spans 502 residues: NAD(P)H-quinone oxidoreductase chain 4, chloroplastic (502 aa).

Transmembrane regions (helical) follow at residues 4 to 24 (YPWL…IPLL), 39 to 59 (LGIC…HFDI), 89 to 109 (IGLT…AWPV), 115 to 132 (LFHS…GLFT), 136 to 156 (ILLF…LLSM), 169 to 189 (FILY…TMGL), 209 to 229 (IALE…KLPI), 244 to 264 (HYST…YGLI), 276 to 296 (SIFA…AASI), 315 to 335 (MGFV…GAIL), 387 to 407 (SLAL…PGIV), 418 to 438 (IIIT…LLSM), and 466 to 486 (IFIS…PNLI).

It belongs to the complex I subunit 4 family.

Its subcellular location is the plastid. The protein localises to the chloroplast thylakoid membrane. The enzyme catalyses a plastoquinone + NADH + (n+1) H(+)(in) = a plastoquinol + NAD(+) + n H(+)(out). It carries out the reaction a plastoquinone + NADPH + (n+1) H(+)(in) = a plastoquinol + NADP(+) + n H(+)(out). The sequence is that of NAD(P)H-quinone oxidoreductase chain 4, chloroplastic from Huperzia lucidula (Shining clubmoss).